The following is a 319-amino-acid chain: ATP-dependent 6-phosphofructokinase (319 aa).

Gly-11 serves as a coordination point for ATP. An ADP-binding site is contributed by 21 to 25 (RAVVR). ATP contacts are provided by residues 72–73 (RC) and 102–105 (GDGS). Asp-103 provides a ligand contact to Mg(2+). 125-127 (TID) is a substrate binding site. Asp-127 functions as the Proton acceptor in the catalytic mechanism. Residue Arg-154 coordinates ADP. Residues Arg-162 and 169-171 (MGR) each bind substrate. Residues 185 to 187 (GAE), Arg-211, and 213 to 215 (KKH) each bind ADP. Substrate is bound by residues Glu-222, Arg-243, and 249-252 (HVQR).

The protein belongs to the phosphofructokinase type A (PFKA) family. ATP-dependent PFK group I subfamily. Prokaryotic clade 'B1' sub-subfamily. In terms of assembly, homotetramer. It depends on Mg(2+) as a cofactor.

The protein resides in the cytoplasm. The catalysed reaction is beta-D-fructose 6-phosphate + ATP = beta-D-fructose 1,6-bisphosphate + ADP + H(+). Its pathway is carbohydrate degradation; glycolysis; D-glyceraldehyde 3-phosphate and glycerone phosphate from D-glucose: step 3/4. Allosterically activated by ADP and other diphosphonucleosides, and allosterically inhibited by phosphoenolpyruvate. Catalyzes the phosphorylation of D-fructose 6-phosphate to fructose 1,6-bisphosphate by ATP, the first committing step of glycolysis. This chain is ATP-dependent 6-phosphofructokinase, found in Bacillus cereus (strain B4264).